The sequence spans 592 residues: Arginine--tRNA ligase (592 aa).

The 'HIGH' region motif lies at 123 to 133 (PNTNKPLHLGH).

This sequence belongs to the class-I aminoacyl-tRNA synthetase family. Monomer.

It is found in the cytoplasm. It carries out the reaction tRNA(Arg) + L-arginine + ATP = L-arginyl-tRNA(Arg) + AMP + diphosphate. This Flavobacterium johnsoniae (strain ATCC 17061 / DSM 2064 / JCM 8514 / BCRC 14874 / CCUG 350202 / NBRC 14942 / NCIMB 11054 / UW101) (Cytophaga johnsonae) protein is Arginine--tRNA ligase.